The chain runs to 341 residues: L-threonine 3-dehydrogenase (341 aa).

Cys-38 is a Zn(2+) binding site. Active-site charge relay system residues include Thr-40 and His-43. Zn(2+) contacts are provided by His-63, Glu-64, Cys-93, Cys-96, Cys-99, and Cys-107. NAD(+) is bound by residues Ile-175, Asp-195, Arg-200, 262–264 (LGI), and 286–287 (IY).

Belongs to the zinc-containing alcohol dehydrogenase family. As to quaternary structure, homotetramer. Zn(2+) serves as cofactor.

It is found in the cytoplasm. The catalysed reaction is L-threonine + NAD(+) = (2S)-2-amino-3-oxobutanoate + NADH + H(+). The protein operates within amino-acid degradation; L-threonine degradation via oxydo-reductase pathway; glycine from L-threonine: step 1/2. Catalyzes the NAD(+)-dependent oxidation of L-threonine to 2-amino-3-ketobutyrate. The polypeptide is L-threonine 3-dehydrogenase (Klebsiella pneumoniae subsp. pneumoniae (strain ATCC 700721 / MGH 78578)).